Consider the following 149-residue polypeptide: D-aminoacyl-tRNA deacylase (149 aa).

Residues 137 to 138 (GP) carry the Gly-cisPro motif, important for rejection of L-amino acids motif.

The protein belongs to the DTD family. As to quaternary structure, homodimer.

The protein resides in the cytoplasm. The enzyme catalyses glycyl-tRNA(Ala) + H2O = tRNA(Ala) + glycine + H(+). The catalysed reaction is a D-aminoacyl-tRNA + H2O = a tRNA + a D-alpha-amino acid + H(+). Its function is as follows. An aminoacyl-tRNA editing enzyme that deacylates mischarged D-aminoacyl-tRNAs. Also deacylates mischarged glycyl-tRNA(Ala), protecting cells against glycine mischarging by AlaRS. Acts via tRNA-based rather than protein-based catalysis; rejects L-amino acids rather than detecting D-amino acids in the active site. By recycling D-aminoacyl-tRNA to D-amino acids and free tRNA molecules, this enzyme counteracts the toxicity associated with the formation of D-aminoacyl-tRNA entities in vivo and helps enforce protein L-homochirality. The polypeptide is D-aminoacyl-tRNA deacylase (Thermotoga petrophila (strain ATCC BAA-488 / DSM 13995 / JCM 10881 / RKU-1)).